A 491-amino-acid chain; its full sequence is Protein ICE2 (491 aa).

Over 1 to 13 (MTSLSKSFMQSGR) the chain is Cytoplasmic. Residues 14-34 (ICAACFYLLFTLLSIPISFKV) traverse the membrane as a helical segment. Over 35–40 (GGLECG) the chain is Lumenal. A helical transmembrane segment spans residues 41-61 (LSFTVTLFTLYFITTTLNVLA). Residues 62-74 (RRHGGRLYIFFTN) are Cytoplasmic-facing. The chain crosses the membrane as a helical span at residues 75 to 95 (CLYYSQHFIIASLLYLFLSGF). Over 96–149 (SNDELGNVLKNKYNESESFLEALKNSLNSNQINYVLYYYYYRFVVQPWQFVLTK) the chain is Lumenal. Residues 150–170 (STPFFTLSEGFFTILAIQAVG) form a helical membrane-spanning segment. Over 171–184 (ETNRWLSNDLNSNT) the chain is Cytoplasmic. Residues 185 to 205 (WIISSLLTSGGVITASLYYLY) traverse the membrane as a helical segment. Topologically, residues 206 to 218 (RIYVTPIWPLSIQ) are lumenal. The helical transmembrane segment at 219 to 239 (TASLLGLVLSMVCGLGLYGIV) threads the bilayer. The Cytoplasmic portion of the chain corresponds to 240 to 294 (SQKGSVIESSLFFAYIVRCIYEISPKLATTATDEILNLFKDVWQKHQRNLPTADN). A helical membrane pass occupies residues 295–315 (LLCYFHNVILKNAEVLWGSFI). The Lumenal segment spans residues 316-373 (PRGRKKTGDFHDKLISILSFEKVSLISKPFWKFFKNFTFSVPLSINEFCQVTIKMASE). Residues 374–394 (SVSPAIVINLCFRVLMFYSAT) form a helical membrane-spanning segment. At 395–413 (RIIPALQRKNDKQLRKSRR) the chain is on the cytoplasmic side. A helical transmembrane segment spans residues 414 to 434 (IMKGLYWYSPCILIAMYTHLI). At 435–461 (LQYSGELKKDLCIWGCSEKWFGVDQPE) the chain is on the lumenal side. The chain crosses the membrane as a helical span at residues 462-482 (IIVDSWGFWNWCNIFCTILVY). At 483–491 (ATELIGSGS) the chain is on the cytoplasmic side.

It is found in the endoplasmic reticulum membrane. The chain is Protein ICE2 (ICE2) from Saccharomyces cerevisiae (strain ATCC 204508 / S288c) (Baker's yeast).